We begin with the raw amino-acid sequence, 179 residues long: ATP-dependent protease subunit HslV (179 aa).

Thr-7 is an active-site residue. Gly-162, Cys-165, and Thr-168 together coordinate Na(+).

The protein belongs to the peptidase T1B family. HslV subfamily. In terms of assembly, a double ring-shaped homohexamer of HslV is capped on each side by a ring-shaped HslU homohexamer. The assembly of the HslU/HslV complex is dependent on binding of ATP.

Its subcellular location is the cytoplasm. It catalyses the reaction ATP-dependent cleavage of peptide bonds with broad specificity.. Its activity is regulated as follows. Allosterically activated by HslU binding. Functionally, protease subunit of a proteasome-like degradation complex believed to be a general protein degrading machinery. The sequence is that of ATP-dependent protease subunit HslV from Bordetella avium (strain 197N).